The primary structure comprises 179 residues: ATP-dependent protease subunit HslV (179 aa).

Residue Thr-6 is part of the active site. Positions 164, 167, and 170 each coordinate Na(+).

Belongs to the peptidase T1B family. HslV subfamily. As to quaternary structure, a double ring-shaped homohexamer of HslV is capped on each side by a ring-shaped HslU homohexamer. The assembly of the HslU/HslV complex is dependent on binding of ATP.

It localises to the cytoplasm. It catalyses the reaction ATP-dependent cleavage of peptide bonds with broad specificity.. Allosterically activated by HslU binding. Functionally, protease subunit of a proteasome-like degradation complex believed to be a general protein degrading machinery. This is ATP-dependent protease subunit HslV from Listeria innocua serovar 6a (strain ATCC BAA-680 / CLIP 11262).